Here is a 353-residue protein sequence, read N- to C-terminus: Quinolinate synthase (353 aa).

Residues H47 and S68 each contribute to the iminosuccinate site. C113 is a binding site for [4Fe-4S] cluster. Iminosuccinate contacts are provided by residues 139–141 (YAN) and S156. A [4Fe-4S] cluster-binding site is contributed by C200. Iminosuccinate is bound by residues 226–228 (HPE) and T243. C297 is a binding site for [4Fe-4S] cluster.

This sequence belongs to the quinolinate synthase family. Type 1 subfamily. [4Fe-4S] cluster is required as a cofactor.

It localises to the cytoplasm. The enzyme catalyses iminosuccinate + dihydroxyacetone phosphate = quinolinate + phosphate + 2 H2O + H(+). It functions in the pathway cofactor biosynthesis; NAD(+) biosynthesis; quinolinate from iminoaspartate: step 1/1. Its function is as follows. Catalyzes the condensation of iminoaspartate with dihydroxyacetone phosphate to form quinolinate. The polypeptide is Quinolinate synthase (Yersinia pseudotuberculosis serotype O:3 (strain YPIII)).